A 111-amino-acid chain; its full sequence is Universal stress protein B (111 aa).

2 consecutive transmembrane segments (helical) span residues 1-21 (MIST…NMAR) and 90-110 (FILT…LMIW).

This sequence belongs to the universal stress protein B family.

The protein localises to the cell inner membrane. This is Universal stress protein B from Escherichia coli O45:K1 (strain S88 / ExPEC).